The following is a 163-amino-acid chain: Nucleotide-binding protein Asuc_2113 (163 aa).

It belongs to the YajQ family.

Functionally, nucleotide-binding protein. This chain is Nucleotide-binding protein Asuc_2113, found in Actinobacillus succinogenes (strain ATCC 55618 / DSM 22257 / CCUG 43843 / 130Z).